The chain runs to 473 residues: Argininosuccinate lyase (473 aa).

Belongs to the lyase 1 family. Argininosuccinate lyase subfamily.

Its subcellular location is the cytoplasm. It catalyses the reaction 2-(N(omega)-L-arginino)succinate = fumarate + L-arginine. Its pathway is amino-acid biosynthesis; L-arginine biosynthesis; L-arginine from L-ornithine and carbamoyl phosphate: step 3/3. In Chelativorans sp. (strain BNC1), this protein is Argininosuccinate lyase.